Consider the following 492-residue polypeptide: ATP synthase subunit beta, chloroplastic (492 aa).

Position 170–177 (170–177 (GGAGVGKT)) interacts with ATP.

This sequence belongs to the ATPase alpha/beta chains family. In terms of assembly, F-type ATPases have 2 components, CF(1) - the catalytic core - and CF(0) - the membrane proton channel. CF(1) has five subunits: alpha(3), beta(3), gamma(1), delta(1), epsilon(1). CF(0) has four main subunits: a(1), b(1), b'(1) and c(9-12).

The protein localises to the plastid. The protein resides in the chloroplast thylakoid membrane. The enzyme catalyses ATP + H2O + 4 H(+)(in) = ADP + phosphate + 5 H(+)(out). In terms of biological role, produces ATP from ADP in the presence of a proton gradient across the membrane. The catalytic sites are hosted primarily by the beta subunits. The polypeptide is ATP synthase subunit beta, chloroplastic (Huperzia lucidula (Shining clubmoss)).